The chain runs to 261 residues: Indole-3-glycerol phosphate synthase (261 aa).

Belongs to the TrpC family.

The catalysed reaction is 1-(2-carboxyphenylamino)-1-deoxy-D-ribulose 5-phosphate + H(+) = (1S,2R)-1-C-(indol-3-yl)glycerol 3-phosphate + CO2 + H2O. It functions in the pathway amino-acid biosynthesis; L-tryptophan biosynthesis; L-tryptophan from chorismate: step 4/5. In Burkholderia pseudomallei (strain 668), this protein is Indole-3-glycerol phosphate synthase.